We begin with the raw amino-acid sequence, 909 residues long: MKRRVIKMATRASDMHLLNVPLSQPHFFDPHSAWLRHGPFGMWLVHALRPRRIVELGTHYGFSYFCFCQAVAAGDLATECFAVDTWQGDEHAGFYGEEIYHRVMAHNQQYVRFSRLLRKTFTEALDDIEDSSVDLLHVDGRHFYHDVKADFENWIPKLSPRSVVLFHDTEVREHGFGVWQYWAELAAIRPSLNFPYQHGLGMLFWGKEIAEGLAPLARTLTDTERLNWPVEYFALAGESYVRDATQRGVIKRLELAEATIEERKAETVLVQQKLQEARRRPLKQLKRKLVFNMLRAAAKASPPLPSRTAERFRRSAAKRDPMRDDLQTLSGQGFMTYEAVVRGWGKQRQALAGRLSELVRRLQNGPLISVVVPVYNPDPALLVEMIESVRAQSYANWELCLADDCSTDPEVGRVLRNYAAQDPRVRVVFREANGHMSQASNSAIEIARGAYIALLDHDDLLDPDALVLVVQVIDAHPDAKIIYTDEDKIVEGGTRCDAHFKPDWNRDLLYGINYISHLGVFDAALVREVGAFREGFEGAQDYDMLLRCIERVQDRQIHHIAKVLYSWRATPGSAAASNRAKPYANEAGRRALEEHLARTTGKSIPVVLGPIPFSYRALWPMEGTPLVSIIIPTRDHLNVLRATVESILGRTMYGNFELIVVDNGSVEADTLEWFGQIEGSDRRVRVLRDARPFNYSALNNAAVAQSRGEIVALVNDDVEVIAPDWLSEMVALAQRPGVGCVGAKLYYPDGRIQHAGVVIGLGGVAGHGHLLYPGEHAGYFCRLKLRQNYSAVTAACLVIKREIFDAVGGLNESELTVAFSDIDLCLKVRAAGYNNVWTPWAELYHHESASRGHEDTPEKRARFRREVDYMKRRWKTHDFADPAYNPNLALERNDFVLSSPRWCISTKLT.

This is an uncharacterized protein from Sinorhizobium fredii (strain NBRC 101917 / NGR234).